A 308-amino-acid chain; its full sequence is Ribosomal RNA large subunit methyltransferase F (308 aa).

The protein belongs to the methyltransferase superfamily. METTL16/RlmF family.

The protein localises to the cytoplasm. The catalysed reaction is adenosine(1618) in 23S rRNA + S-adenosyl-L-methionine = N(6)-methyladenosine(1618) in 23S rRNA + S-adenosyl-L-homocysteine + H(+). Specifically methylates the adenine in position 1618 of 23S rRNA. The protein is Ribosomal RNA large subunit methyltransferase F of Escherichia coli O17:K52:H18 (strain UMN026 / ExPEC).